Consider the following 299-residue polypeptide: ATP phosphoribosyltransferase (299 aa).

The protein belongs to the ATP phosphoribosyltransferase family. Long subfamily. The cofactor is Mg(2+).

Its subcellular location is the cytoplasm. The enzyme catalyses 1-(5-phospho-beta-D-ribosyl)-ATP + diphosphate = 5-phospho-alpha-D-ribose 1-diphosphate + ATP. The protein operates within amino-acid biosynthesis; L-histidine biosynthesis; L-histidine from 5-phospho-alpha-D-ribose 1-diphosphate: step 1/9. Feedback inhibited by histidine. Its function is as follows. Catalyzes the condensation of ATP and 5-phosphoribose 1-diphosphate to form N'-(5'-phosphoribosyl)-ATP (PR-ATP). Has a crucial role in the pathway because the rate of histidine biosynthesis seems to be controlled primarily by regulation of HisG enzymatic activity. The protein is ATP phosphoribosyltransferase of Baumannia cicadellinicola subsp. Homalodisca coagulata.